The chain runs to 130 residues: uncharacterized protein (130 aa).

Residues 85 to 116 (NDSDDDCSENDSDGDCSENDSDNDYSENESDC) are disordered.

The protein belongs to the mimivirus L5 family.

This is an uncharacterized protein from Acanthamoeba polyphaga mimivirus (APMV).